The sequence spans 104 residues: uncharacterized protein (104 aa).

The chain crosses the membrane as a helical span at residues 72–92 (LIFSHNIVIIVSPIYMISFII).

Its subcellular location is the membrane. This is an uncharacterized protein from Saccharomyces cerevisiae (strain ATCC 204508 / S288c) (Baker's yeast).